The following is a 285-amino-acid chain: Nucleotide-binding protein Pmen_0867 (285 aa).

ATP is bound at residue 8 to 15 (GRSGSGKS). 60–63 (DARN) contributes to the GTP binding site.

It belongs to the RapZ-like family.

Functionally, displays ATPase and GTPase activities. In Ectopseudomonas mendocina (strain ymp) (Pseudomonas mendocina), this protein is Nucleotide-binding protein Pmen_0867.